We begin with the raw amino-acid sequence, 225 residues long: Phosphoserine phosphatase (225 aa).

Met-1 carries the N-acetylmethionine modification. The Nucleophile role is filled by Asp-20. 2 residues coordinate Mg(2+): Asp-20 and Asp-22. Residue 20-22 (DVD) participates in L-serine binding. The active-site Proton donor is the Asp-22. Residue Met-52 coordinates O-phospho-L-serine. Gly-53 contacts phosphate. L-serine is bound by residues 109-111 (SGG) and Lys-158. O-phospho-L-serine is bound by residues 109 to 111 (SGG) and Lys-158. Residue Asp-179 coordinates Mg(2+). Thr-182 is a binding site for O-phospho-L-serine. Thr-182 provides a ligand contact to phosphate.

This sequence belongs to the HAD-like hydrolase superfamily. SerB family. In terms of assembly, homodimer. Mg(2+) is required as a cofactor.

Its subcellular location is the cytoplasm. It localises to the cytosol. The enzyme catalyses O-phospho-L-serine + H2O = L-serine + phosphate. The catalysed reaction is O-phospho-D-serine + H2O = D-serine + phosphate. It participates in amino-acid biosynthesis; L-serine biosynthesis; L-serine from 3-phospho-D-glycerate: step 3/3. Functionally, catalyzes the last irreversible step in the biosynthesis of L-serine from carbohydrates, the dephosphorylation of O-phospho-L-serine to L-serine. L-serine can then be used in protein synthesis, to produce other amino acids, in nucleotide metabolism or in glutathione synthesis, or can be racemized to D-serine, a neuromodulator. May also act on O-phospho-D-serine. The polypeptide is Phosphoserine phosphatase (Bos taurus (Bovine)).